The sequence spans 519 residues: Nitrogen fixation regulatory protein (519 aa).

In terms of domain architecture, PAS 1 spans 23–93 (LPEIFRQTVE…QALWGRLAQK (71 aa)). The 55-residue stretch at 94–148 (KPWSGVLVNRRKDKTLYLAELTVAPVLNEAGETIYYLGMHRDTSELHELEQRVNN) folds into the PAC domain. The PAS 2 domain maps to 151 to 217 (LMIEAVVNAA…FETLENQGSA (67 aa)). In terms of domain architecture, Histidine kinase spans 302-517 (AAIHRLQGPV…RIVVELPFSA (216 aa)). His-305 is modified (phosphohistidine; by autocatalysis).

FAD is required as a cofactor.

It catalyses the reaction ATP + protein L-histidine = ADP + protein N-phospho-L-histidine.. Its function is as follows. Required for the inhibition of NifA activity in response to oxygen and low level of fixed nitrogen. This chain is Nitrogen fixation regulatory protein (nifL), found in Azotobacter vinelandii.